Consider the following 246-residue polypeptide: B-cell receptor-associated protein 31 (246 aa).

Over 2-6 the chain is Lumenal; that stretch reads SLQWT. Residues 7–27 form a helical membrane-spanning segment; the sequence is AVATFLYAEVFVVLLLCIPFI. Over 28 to 43 the chain is Cytoplasmic; it reads SPKRWQKIFKSRLVEL. A helical membrane pass occupies residues 44 to 64; sequence LVSYGNTFFVVLIVILVLLVI. Residues 65–102 are Lumenal-facing; the sequence is DAVREIRKYDDVTEKVNLQNNPGAMEHFHMKLFRAQRN. The helical transmembrane segment at 103–123 threads the bilayer; sequence LYIAGFSLLLSFLLRRLVTLI. The Cytoplasmic portion of the chain corresponds to 124-246; sequence SQQATLLASN…VDGPMDKKEE (123 aa). The stretch at 165–237 forms a coiled coil; the sequence is GGKLDVGNAE…EEHAKLQAAV (73 aa). The Di-lysine motif motif lies at 243-246; that stretch reads KKEE.

This sequence belongs to the BCAP29/BCAP31 family. As to quaternary structure, homodimer and heterodimer with BCAP29. Binds CASP8 (isoform 9) as a complex containing BCAP31, BCAP29, BCL2 and/or BCL2L1. Forms a complex (via C-terminus) with TOMM40 which mediates the translocation of components of the mitochondrial membrane respiratory chain NADH dehydrogenase (Complex I) from the cytosol to the mitochondria; within the complex BCAP31 interacts directly with unprocessed and processed NDUFS4 and NDUFB11. Interacts with VDAC1. Interacts with VAMP3, VAMP1 and membrane IgD immunoglobulins. Interacts with HACD2. Interacts with DNM1L; may form part of a larger protein complex at the endoplasmic reticulum-mitochondrial interface during mitochondrial fission. (Microbial infection) Interacts (via C-terminus) with HRSV membrane protein SH; this interaction is direct. In terms of processing, cleaved by CASP8 and other caspases. Ubiquitous. Highly expressed in neurons and discrete endocrine cells.

Its subcellular location is the endoplasmic reticulum membrane. It localises to the endoplasmic reticulum-Golgi intermediate compartment membrane. Functions as a chaperone protein. Is one of the most abundant endoplasmic reticulum (ER) proteins. Plays a role in the export of secreted proteins in the ER, the recognition of abnormally folded protein and their targeting to the ER associated-degradation (ERAD). Also serves as a cargo receptor for the export of transmembrane proteins. Plays a role in the assembly of the mitochondrial membrane respiratory chain NADH dehydrogenase (Complex I) by stimulating the translocation of NDUFS4 and NDUFB11 from the cytosol to the mitochondria via interaction with TOMM40. In response to ER stress, delocalizes from the ER-mitochondria contact sites and binds BCL2. May be involved in CASP8-mediated apoptosis. In Homo sapiens (Human), this protein is B-cell receptor-associated protein 31.